We begin with the raw amino-acid sequence, 557 residues long: Dihydroxy-acid dehydratase 2 (557 aa).

Position 50 (C50) interacts with [2Fe-2S] cluster. D82 is a Mg(2+) binding site. C123 is a binding site for [2Fe-2S] cluster. Mg(2+) contacts are provided by D124 and K125. N6-carboxylysine is present on K125. A [2Fe-2S] cluster-binding site is contributed by C195. E447 lines the Mg(2+) pocket. S473 (proton acceptor) is an active-site residue.

The protein belongs to the IlvD/Edd family. Homodimer. [2Fe-2S] cluster is required as a cofactor. It depends on Mg(2+) as a cofactor.

It carries out the reaction (2R)-2,3-dihydroxy-3-methylbutanoate = 3-methyl-2-oxobutanoate + H2O. It catalyses the reaction (2R,3R)-2,3-dihydroxy-3-methylpentanoate = (S)-3-methyl-2-oxopentanoate + H2O. The protein operates within amino-acid biosynthesis; L-isoleucine biosynthesis; L-isoleucine from 2-oxobutanoate: step 3/4. Its pathway is amino-acid biosynthesis; L-valine biosynthesis; L-valine from pyruvate: step 3/4. Its function is as follows. Functions in the biosynthesis of branched-chain amino acids. Catalyzes the dehydration of (2R,3R)-2,3-dihydroxy-3-methylpentanoate (2,3-dihydroxy-3-methylvalerate) into 2-oxo-3-methylpentanoate (2-oxo-3-methylvalerate) and of (2R)-2,3-dihydroxy-3-methylbutanoate (2,3-dihydroxyisovalerate) into 2-oxo-3-methylbutanoate (2-oxoisovalerate), the penultimate precursor to L-isoleucine and L-valine, respectively. This chain is Dihydroxy-acid dehydratase 2, found in Burkholderia lata (strain ATCC 17760 / DSM 23089 / LMG 22485 / NCIMB 9086 / R18194 / 383).